The chain runs to 95 residues: Aspartyl/glutamyl-tRNA(Asn/Gln) amidotransferase subunit C (95 aa).

The protein belongs to the GatC family. Heterotrimer of A, B and C subunits.

It carries out the reaction L-glutamyl-tRNA(Gln) + L-glutamine + ATP + H2O = L-glutaminyl-tRNA(Gln) + L-glutamate + ADP + phosphate + H(+). The catalysed reaction is L-aspartyl-tRNA(Asn) + L-glutamine + ATP + H2O = L-asparaginyl-tRNA(Asn) + L-glutamate + ADP + phosphate + 2 H(+). Its function is as follows. Allows the formation of correctly charged Asn-tRNA(Asn) or Gln-tRNA(Gln) through the transamidation of misacylated Asp-tRNA(Asn) or Glu-tRNA(Gln) in organisms which lack either or both of asparaginyl-tRNA or glutaminyl-tRNA synthetases. The reaction takes place in the presence of glutamine and ATP through an activated phospho-Asp-tRNA(Asn) or phospho-Glu-tRNA(Gln). The sequence is that of Aspartyl/glutamyl-tRNA(Asn/Gln) amidotransferase subunit C from Nitrobacter winogradskyi (strain ATCC 25391 / DSM 10237 / CIP 104748 / NCIMB 11846 / Nb-255).